The primary structure comprises 234 residues: MRLVQLSRHNIAFPSPEGALREPNGLLALGGDLSPARLLMAYQRGIFPWFSPGDPILWWSPDPRAILEPSQFHLSRSMKRFHAKSPYRVTLNYAFGQVIEGCAADRDEGTWITHDIINAYLRLHELGYAHSIEVWDNDTLVGGMYGVAQGTLFCGESMFSRAVNASKTALLVFCQEFSLRGGQLMDCQVLNEHTASLGAVEITRRHYLDELGNLRQQKLPQNFWVPRTLFMPQV.

It belongs to the L/F-transferase family.

It localises to the cytoplasm. The enzyme catalyses N-terminal L-lysyl-[protein] + L-leucyl-tRNA(Leu) = N-terminal L-leucyl-L-lysyl-[protein] + tRNA(Leu) + H(+). The catalysed reaction is N-terminal L-arginyl-[protein] + L-leucyl-tRNA(Leu) = N-terminal L-leucyl-L-arginyl-[protein] + tRNA(Leu) + H(+). It carries out the reaction L-phenylalanyl-tRNA(Phe) + an N-terminal L-alpha-aminoacyl-[protein] = an N-terminal L-phenylalanyl-L-alpha-aminoacyl-[protein] + tRNA(Phe). In terms of biological role, functions in the N-end rule pathway of protein degradation where it conjugates Leu, Phe and, less efficiently, Met from aminoacyl-tRNAs to the N-termini of proteins containing an N-terminal arginine or lysine. This chain is Leucyl/phenylalanyl-tRNA--protein transferase, found in Enterobacter sp. (strain 638).